Here is a 2273-residue protein sequence, read N- to C-terminus: Nonribosomal peptide synthetase hasD (2273 aa).

The segment at 100-446 (FHDQLQKHSS…AGLGLALGYF (347 aa)) is adenylation 1. Residues 588-664 (ERGLGAVESV…NIAAAVVELS (77 aa)) enclose the Carrier 1 domain. An O-(pantetheine 4'-phosphoryl)serine modification is found at serine 625. A condensation 1 region spans residues 696 to 1120 (IAPMTDMQTR…AAQPDTDLSN (425 aa)). The adenylation 2 stretch occupies residues 1156 to 1487 (ENSIQAHPDI…SGVQVTPGYL (332 aa)). Residues 1634–1714 (DLETDTQRVL…DLSLAIDELV (81 aa)) form the Carrier 2 domain. O-(pantetheine 4'-phosphoryl)serine is present on serine 1673. Residues 1735-2127 (GQLPLSYLEK…QDLEVDMEYD (393 aa)) form a condensation 2 region. Residues 2174-2200 (PVGLTPSHEGSAELTNGTNKTDSTTGQ) form a disordered region. Residues 2186 to 2200 (ELTNGTNKTDSTTGQ) show a composition bias toward polar residues. Residues 2201-2273 (QELENNLTDV…LELATCAVII (73 aa)) enclose the Carrier 3 domain. The residue at position 2235 (serine 2235) is an O-(pantetheine 4'-phosphoryl)serine.

This sequence belongs to the NRP synthetase family. Pantetheine 4'-phosphate is required as a cofactor.

It functions in the pathway secondary metabolite biosynthesis. In terms of biological role, nonribosomal peptide synthetase; part of the gene cluster that mediates the biosynthesis of hexadehydro-astechrome (HAS), a tryptophan-derived iron(III)-complex that acts as a virulence factor in infected mice. Within the pathway, the NRPS condenses tryptophan and alanine to produce the Trp-Ala dipeptide. The 7-dimethylallyltryptophan synthase hasE then catalyzes the prenylation of the hasD-tethered tryptophan or the resulting tethered Trp-Ala dipeptide at the C-7 position of the indole moiety. HAS biosynthesis continues via tethered intermediates with the succesive actions of the cytochrome P450 monooxygenase hasH, the O-methyltransferase hasC, and the FAD-linked oxidoreductase hasG. The resulting O-methylated diketopiperazine is then released from hasD. Finally, three O-methylated diketopiperazine molecules assemble in a trimeric complex with Fe(III) to produce hexadehydro-astechrome. The protein is Nonribosomal peptide synthetase hasD of Aspergillus fumigatus (strain CBS 144.89 / FGSC A1163 / CEA10) (Neosartorya fumigata).